The primary structure comprises 212 residues: ATP-dependent dethiobiotin synthetase BioD (212 aa).

12-17 (DCGKTF) contacts ATP. Residue threonine 16 coordinates Mg(2+). Residue lysine 33 is part of the active site. A substrate-binding site is contributed by serine 37. ATP is bound by residues aspartate 50, 110 to 113 (EGAG), and 170 to 171 (NC). Mg(2+) is bound by residues aspartate 50 and glutamate 110.

Belongs to the dethiobiotin synthetase family. In terms of assembly, homodimer. It depends on Mg(2+) as a cofactor.

It is found in the cytoplasm. The catalysed reaction is (7R,8S)-7,8-diammoniononanoate + CO2 + ATP = (4R,5S)-dethiobiotin + ADP + phosphate + 3 H(+). The protein operates within cofactor biosynthesis; biotin biosynthesis; biotin from 7,8-diaminononanoate: step 1/2. In terms of biological role, catalyzes a mechanistically unusual reaction, the ATP-dependent insertion of CO2 between the N7 and N8 nitrogen atoms of 7,8-diaminopelargonic acid (DAPA, also called 7,8-diammoniononanoate) to form a ureido ring. In Legionella pneumophila (strain Lens), this protein is ATP-dependent dethiobiotin synthetase BioD.